A 1171-amino-acid polypeptide reads, in one-letter code: Structural maintenance of chromosomes protein 2-2 (1171 aa).

The region spanning 2–1158 (HIKEICLEGF…DVLFRTKFVD (1157 aa)) is the Zinc-hook domain. 32–39 (GLNGSGKS) lines the ATP pocket. The stretch at 172–510 (RMYENKKEAA…LANVQFTYRD (339 aa)) forms a coiled coil. The 118-residue stretch at 518-635 (SKVKGVVAKL…KTTDAAKEVA (118 aa)) folds into the SMC hinge domain. Positions 674–1026 (HDLAEAETKF…LDEKKKETLK (353 aa)) form a coiled coil.

The protein belongs to the SMC family. SMC2 subfamily. As to quaternary structure, forms a heterodimer with SMC4. Component of the condensin complex, which contains the SMC2 and SMC4 heterodimer, and three non SMC subunits that probably regulate the complex: CAPH, CAPD2 and CAPG. In terms of tissue distribution, highly expressed in roots and young floral buds.

It localises to the nucleus. Its function is as follows. Central component of the condensin complex, a complex required for conversion of interphase chromatin into mitotic-like condense chromosomes. The condensin complex probably introduces positive supercoils into relaxed DNA in the presence of type I topoisomerases and converts nicked DNA into positive knotted forms in the presence of type II topoisomerases. Also involved in chromosome segregation in meiosis. This is Structural maintenance of chromosomes protein 2-2 (SMC2-2) from Arabidopsis thaliana (Mouse-ear cress).